The chain runs to 60 residues: Large ribosomal subunit protein uL30 (60 aa).

The protein belongs to the universal ribosomal protein uL30 family. Part of the 50S ribosomal subunit.

This chain is Large ribosomal subunit protein uL30, found in Dechloromonas aromatica (strain RCB).